Reading from the N-terminus, the 343-residue chain is C-X-C chemokine receptor type 6 (343 aa).

Residues 1 to 33 are Extracellular-facing; that stretch reads MAEYDHYEDDGFLNSFNDSSQEEHQDFLQFRKV. The N-linked (GlcNAc...) asparagine glycan is linked to Asn17. A helical membrane pass occupies residues 34–60; that stretch reads FLPCMYLVVFVCGLVGNSLVLVISIFY. At 61–69 the chain is on the cytoplasmic side; sequence HKLQSLTDV. Residues 70–90 traverse the membrane as a helical segment; it reads FLVNLPLADLVFVCTLPFWTY. At 91-104 the chain is on the extracellular side; it reads AGIHEWIFGQVMCK. Residues Cys103 and Cys181 are joined by a disulfide bond. A helical transmembrane segment spans residues 105-126; sequence TLLGVYTINFYTSMLILTCITV. Topologically, residues 127 to 144 are cytoplasmic; that stretch reads DRFIVVVKATKAYNQQAK. Residues 145 to 165 form a helical membrane-spanning segment; the sequence is RMTWGKVICLLIWVISLLVSL. The Extracellular segment spans residues 166–188; sequence PQIIYGNVFNLDKLICGYHDEEI. The chain crosses the membrane as a helical span at residues 189-216; that stretch reads STVVLATQMTLGFFLPLLAMIVCYSVII. Over 217–232 the chain is Cytoplasmic; it reads KTLLHAGGFQKHRSLK. The chain crosses the membrane as a helical span at residues 233–260; the sequence is IIFLVMAVFLLTQTPFNLVKLIRSTRWE. Residues 261–276 are Extracellular-facing; it reads YYAMTSFHYTIIVTEA. The chain crosses the membrane as a helical span at residues 277–294; that stretch reads IAYLRACLNPVLYAFVSL. Residues 295 to 343 lie on the Cytoplasmic side of the membrane; that stretch reads KFRKNFWKLVKDIGCLPYLGVSHQWKSSEDNSKTFSASHNVEATSMFQL.

It belongs to the G-protein coupled receptor 1 family.

It localises to the cell membrane. Receptor for the C-X-C chemokine CXCL16. Used as a coreceptor by SIVs and by strains of HIV-2 and m-tropic HIV-1. The sequence is that of C-X-C chemokine receptor type 6 (CXCR6) from Macaca fascicularis (Crab-eating macaque).